We begin with the raw amino-acid sequence, 279 residues long: Protease HtpX homolog (279 aa).

The next 2 membrane-spanning stretches (helical) occupy residues 6-26 and 29-49; these read VFVLMAGLTGLVVAIGQALGG and GAILALLLSAGMNLFMYWGSS. H130 provides a ligand contact to Zn(2+). Residue E131 is part of the active site. H134 contributes to the Zn(2+) binding site. 2 helical membrane passes run 145–165 and 176–196; these read IAATMAGAVSNLAQFAFFFGG and VAGIAMLIIGPIVAMVIQFAI. Zn(2+) is bound at residue E201.

This sequence belongs to the peptidase M48B family. The cofactor is Zn(2+).

It localises to the cell inner membrane. The protein is Protease HtpX homolog of Gemmatimonas aurantiaca (strain DSM 14586 / JCM 11422 / NBRC 100505 / T-27).